A 330-amino-acid chain; its full sequence is Ribosomal RNA small subunit methyltransferase C (330 aa).

This sequence belongs to the methyltransferase superfamily. RsmC family. Monomer.

It localises to the cytoplasm. It catalyses the reaction guanosine(1207) in 16S rRNA + S-adenosyl-L-methionine = N(2)-methylguanosine(1207) in 16S rRNA + S-adenosyl-L-homocysteine + H(+). In terms of biological role, specifically methylates the guanine in position 1207 of 16S rRNA in the 30S particle. This chain is Ribosomal RNA small subunit methyltransferase C, found in Haemophilus influenzae (strain ATCC 51907 / DSM 11121 / KW20 / Rd).